The following is a 380-amino-acid chain: tRNA-specific 2-thiouridylase MnmA (380 aa).

ATP-binding positions include 6 to 13 (ALSGGVDS) and Met32. Catalysis depends on Cys101, which acts as the Nucleophile. Cys101 and Cys199 form a disulfide bridge. Gly125 serves as a coordination point for ATP. The interaction with tRNA stretch occupies residues 148–150 (KDQ). Residue Cys199 is the Cysteine persulfide intermediate of the active site.

The protein belongs to the MnmA/TRMU family.

The protein resides in the cytoplasm. The catalysed reaction is S-sulfanyl-L-cysteinyl-[protein] + uridine(34) in tRNA + AH2 + ATP = 2-thiouridine(34) in tRNA + L-cysteinyl-[protein] + A + AMP + diphosphate + H(+). In terms of biological role, catalyzes the 2-thiolation of uridine at the wobble position (U34) of tRNA, leading to the formation of s(2)U34. This is tRNA-specific 2-thiouridylase MnmA from Beutenbergia cavernae (strain ATCC BAA-8 / DSM 12333 / CCUG 43141 / JCM 11478 / NBRC 16432 / NCIMB 13614 / HKI 0122).